The following is a 567-amino-acid chain: 2-isopropylmalate synthase (567 aa).

Residues 28–302 (PQWCSVDLRD…NPELDFSDIN (275 aa)) enclose the Pyruvate carboxyltransferase domain. Residues D37, H241, H243, and N277 each coordinate Mg(2+). The interval 435–567 (IRTPLQLNYH…DMDTQEEDIA (133 aa)) is regulatory domain.

This sequence belongs to the alpha-IPM synthase/homocitrate synthase family. LeuA type 2 subfamily. In terms of assembly, homodimer. Mg(2+) serves as cofactor.

It is found in the cytoplasm. It catalyses the reaction 3-methyl-2-oxobutanoate + acetyl-CoA + H2O = (2S)-2-isopropylmalate + CoA + H(+). Its pathway is amino-acid biosynthesis; L-leucine biosynthesis; L-leucine from 3-methyl-2-oxobutanoate: step 1/4. In terms of biological role, catalyzes the condensation of the acetyl group of acetyl-CoA with 3-methyl-2-oxobutanoate (2-ketoisovalerate) to form 3-carboxy-3-hydroxy-4-methylpentanoate (2-isopropylmalate). This chain is 2-isopropylmalate synthase, found in Acetoanaerobium sticklandii (strain ATCC 12662 / DSM 519 / JCM 1433 / CCUG 9281 / NCIMB 10654 / HF) (Clostridium sticklandii).